We begin with the raw amino-acid sequence, 431 residues long: Tyrosine--tRNA ligase (431 aa).

Tyr34 contacts L-tyrosine. The 'HIGH' region motif lies at 39–48 (PTADSLHIGH). L-tyrosine-binding residues include Tyr171 and Gln175. The 'KMSKS' region motif lies at 231 to 235 (KFGKT). Residue Lys234 coordinates ATP. Positions 353–422 (INVVEALVKT…GKYTILRRGK (70 aa)) constitute an S4 RNA-binding domain.

It belongs to the class-I aminoacyl-tRNA synthetase family. TyrS type 1 subfamily. Homodimer.

It localises to the cytoplasm. It carries out the reaction tRNA(Tyr) + L-tyrosine + ATP = L-tyrosyl-tRNA(Tyr) + AMP + diphosphate + H(+). Functionally, catalyzes the attachment of tyrosine to tRNA(Tyr) in a two-step reaction: tyrosine is first activated by ATP to form Tyr-AMP and then transferred to the acceptor end of tRNA(Tyr). The polypeptide is Tyrosine--tRNA ligase (Neisseria meningitidis serogroup C (strain 053442)).